Here is a 259-residue protein sequence, read N- to C-terminus: Insulin-induced gene 1 protein (259 aa).

Residues 1–66 lie on the Cytoplasmic side of the membrane; that stretch reads MPRLHDHVWN…ARPGSWHHDL (66 aa). Positions 36 to 55 are disordered; the sequence is PGVPEPEHAPRGQRAGTTGC. The helical transmembrane segment at 67 to 89 threads the bilayer; the sequence is VQRSLVLFSFGVVLALVLNLLQI. At 90–108 the chain is on the extracellular side; the sequence is QRNVTLFPDEVIATIFSSA. The helical transmembrane segment at 109 to 126 threads the bilayer; that stretch reads WWVPPCCGTAAAVVGLLY. Topologically, residues 127-141 are cytoplasmic; sequence PCIDSHLGEPHKFKR. Glycyl lysine isopeptide (Lys-Gly) (interchain with G-Cter in ubiquitin) cross-links involve residues lysine 138 and lysine 140. A helical membrane pass occupies residues 142 to 164; it reads EWASVMRCIAVFVGINHASAKLD. Over 165-167 the chain is Extracellular; the sequence is FAN. The helical transmembrane segment at 168 to 186 threads the bilayer; sequence NVQLSLTLAALSLGLWWTF. Residues 187 to 191 lie on the Cytoplasmic side of the membrane; that stretch reads DRSRS. Residue serine 189 is modified to Phosphoserine. Residues 192 to 213 form a helical membrane-spanning segment; it reads GLGLGITIAFLATLITQFLVYN. Over 214-227 the chain is Extracellular; the sequence is GVYQYTSPDFLYIR. A helical transmembrane segment spans residues 228–245; it reads SWLPCIFFSGGVTVGNIG. Residues 246–259 are Cytoplasmic-facing; sequence RQLAMGVPEKPHSD. The KxHxx signature appears at 253–259; it reads PEKPHSD.

It belongs to the INSIG family. As to quaternary structure, interacts with SCAP; interaction is direct and only takes place in the presence of sterols; it prevents interaction between SCAP and the coat protein complex II (COPII). Associates with the SCAP-SREBP complex (composed of SCAP and SREBF1/SREBP1 or SREBF2/SREBP2); association is mediated via its interaction with SCAP and only takes place in the presence of sterols. Interaction with SCAP is mutually exclusive with PAQR3. Interacts with HMGCR (via its SSD); the interaction, accelerated by sterols, leads to the recruitment of HMGCR to AMFR/gp78 for its ubiquitination by the sterol-mediated ERAD pathway. Interacts with AMFR/gp78 (via its membrane domain); the interaction recruits HMCR at the ER membrane for its ubiquitination and degradation by the sterol-mediated ERAD pathway. Interacts with SOAT2/ACAT2; leading to promote recruitment of AMFR/gp78 and subsequent ubiquitination of SOAT2/ACAT2. Interacts with RNF139. Interacts with RNF145. Post-translationally, phosphorylation at Ser-189 by PCK1 reduces binding to oxysterol, disrupting the interaction between INSIG1 and SCAP, thereby promoting nuclear translocation of SREBP proteins (SREBF1/SREBP1 or SREBF2/SREBP2) and subsequent transcription of downstream lipogenesis-related genes. In terms of processing, ubiquitinated by AMFR/gp78 in response to sterol deprivation, leading to its degradation: when the SCAP-SREBP complex becomes dissociated from INSIG1, INSIG1 is then ubiquitinated and degraded in proteasomes. Although ubiquitination is required for rapid INSIG1 degradation, it is not required for release of the SCAP-SREBP complex. Ubiquitinated by RNF139.

The protein localises to the endoplasmic reticulum membrane. Functionally, oxysterol-binding protein that mediates feedback control of cholesterol synthesis by controlling both endoplasmic reticulum to Golgi transport of SCAP and degradation of HMGCR. Acts as a negative regulator of cholesterol biosynthesis by mediating the retention of the SCAP-SREBP complex in the endoplasmic reticulum, thereby blocking the processing of sterol regulatory element-binding proteins (SREBPs) SREBF1/SREBP1 and SREBF2/SREBP2. Binds oxysterol, including 25-hydroxycholesterol, regulating interaction with SCAP and retention of the SCAP-SREBP complex in the endoplasmic reticulum. In presence of oxysterol, interacts with SCAP, retaining the SCAP-SREBP complex in the endoplasmic reticulum, thereby preventing SCAP from escorting SREBF1/SREBP1 and SREBF2/SREBP2 to the Golgi. Sterol deprivation or phosphorylation by PCK1 reduce oxysterol-binding, disrupting the interaction between INSIG1 and SCAP, thereby promoting Golgi transport of the SCAP-SREBP complex, followed by processing and nuclear translocation of SREBF1/SREBP1 and SREBF2/SREBP2. Also regulates cholesterol synthesis by regulating degradation of HMGCR: initiates the sterol-mediated ubiquitin-mediated endoplasmic reticulum-associated degradation (ERAD) of HMGCR via recruitment of the reductase to the ubiquitin ligases AMFR/gp78 and/or RNF139. Also regulates degradation of SOAT2/ACAT2 when the lipid levels are low: initiates the ubiquitin-mediated degradation of SOAT2/ACAT2 via recruitment of the ubiquitin ligases AMFR/gp78. This is Insulin-induced gene 1 protein from Mus musculus (Mouse).